Here is a 232-residue protein sequence, read N- to C-terminus: Endonuclease V (232 aa).

Aspartate 43 and aspartate 109 together coordinate Mg(2+).

It belongs to the endonuclease V family. The cofactor is Mg(2+).

The protein localises to the cytoplasm. It carries out the reaction Endonucleolytic cleavage at apurinic or apyrimidinic sites to products with a 5'-phosphate.. Its function is as follows. DNA repair enzyme involved in the repair of deaminated bases. Selectively cleaves double-stranded DNA at the second phosphodiester bond 3' to a deoxyinosine leaving behind the intact lesion on the nicked DNA. The protein is Endonuclease V of Thermofilum pendens (strain DSM 2475 / Hrk 5).